The primary structure comprises 418 residues: Gamma-glutamyl phosphate reductase (418 aa).

The protein belongs to the gamma-glutamyl phosphate reductase family.

The protein localises to the cytoplasm. It catalyses the reaction L-glutamate 5-semialdehyde + phosphate + NADP(+) = L-glutamyl 5-phosphate + NADPH + H(+). It functions in the pathway amino-acid biosynthesis; L-proline biosynthesis; L-glutamate 5-semialdehyde from L-glutamate: step 2/2. Its function is as follows. Catalyzes the NADPH-dependent reduction of L-glutamate 5-phosphate into L-glutamate 5-semialdehyde and phosphate. The product spontaneously undergoes cyclization to form 1-pyrroline-5-carboxylate. The sequence is that of Gamma-glutamyl phosphate reductase from Desulfosudis oleivorans (strain DSM 6200 / JCM 39069 / Hxd3) (Desulfococcus oleovorans).